Reading from the N-terminus, the 94-residue chain is Co-chaperonin GroES (94 aa).

It belongs to the GroES chaperonin family. Heptamer of 7 subunits arranged in a ring. Interacts with the chaperonin GroEL.

It localises to the cytoplasm. Functionally, together with the chaperonin GroEL, plays an essential role in assisting protein folding. The GroEL-GroES system forms a nano-cage that allows encapsulation of the non-native substrate proteins and provides a physical environment optimized to promote and accelerate protein folding. GroES binds to the apical surface of the GroEL ring, thereby capping the opening of the GroEL channel. This chain is Co-chaperonin GroES, found in Streptococcus oralis.